Here is a 70-residue protein sequence, read N- to C-terminus: Large ribosomal subunit protein uL29 (70 aa).

It belongs to the universal ribosomal protein uL29 family.

In Thermosynechococcus vestitus (strain NIES-2133 / IAM M-273 / BP-1), this protein is Large ribosomal subunit protein uL29.